The primary structure comprises 414 residues: 2,3-bisphosphoglycerate-independent phosphoglycerate mutase (414 aa).

It belongs to the BPG-independent phosphoglycerate mutase family. A-PGAM subfamily.

The enzyme catalyses (2R)-2-phosphoglycerate = (2R)-3-phosphoglycerate. The protein operates within carbohydrate degradation; glycolysis; pyruvate from D-glyceraldehyde 3-phosphate: step 3/5. Catalyzes the interconversion of 2-phosphoglycerate and 3-phosphoglycerate. The sequence is that of 2,3-bisphosphoglycerate-independent phosphoglycerate mutase from Saccharolobus islandicus (strain M.14.25 / Kamchatka #1) (Sulfolobus islandicus).